Consider the following 806-residue polypeptide: MAIFNFLKLISPKNRILSKANRIASEVESYKNYYRNLTDQQLFEESNKLVDLVTKQNYTILDVCVAALALIREVVYRETGEFAYRVQIIGAFIVLSGDFAEMMTGEGKTLTIVLAAYVSALEKRGVHVVTVNEYLAQRDANNAMKILKRVGMSVGCNFANLSPQLKQAAFNCDVTYTTNSELGFDYLRDNMVHSYQDKKIRELHFAIVDEGDSVLIDEARTPLIISGPSKNEFGLYVAVDRFVKSLTEQEFKIDPESRAASLTELGIKKAEQTFKKENLFALENSDLFHKIMNGLTAVKVFEQGKEYIVRDGKVLIVDHFTGRILEGRSYSNGLQQAVQAKEYVEIEPENVIVATITYQSFFRLYNRLAAVSGTALTESEEFLKIYNMVVVPVPTNRPNIRKDRSDSVFGTPQIKWMAVVKEIKKIHETSRPILIGTANIDDSELLHNLLLEANIPHEVLNAKNHSREAEIVTKAGQKNAVTISTNMAGRGTDIRLGEGVAEMGGLYVLGTERNESRRIDNQLRGRAARQGDKGETKFFISLGDSLFKRFAHDKIERAISKLGNETFDSAFFSKMLSRTQKRVEAINFDTRKNLIDYDHVLASQRELIYKQRDKFLLANDLSEMIDKMLEKFVQQFCDQYRNQKNQNLINHIALAEALNLEMNMQNTINPKVFENMTFDVAVDKTRNLVAKKISDKVNVLTKPIALNRFRDIIITSMDKHWTEHLDSVFKLREGVVLRSMEHTSPLNVYIKETDILFKTMLQKIAQDVIVQIANLTTPDEFDHSLMQANALKKLAAIKADEKSNQE.

Residues Q87, 105–109, and D493 contribute to the ATP site; that span reads GEGKT.

Belongs to the SecA family. Monomer and homodimer. Part of the essential Sec protein translocation apparatus which comprises SecA, SecYEG and auxiliary proteins SecDF. Other proteins may also be involved.

The protein localises to the cell membrane. Its subcellular location is the cytoplasm. It catalyses the reaction ATP + H2O + cellular proteinSide 1 = ADP + phosphate + cellular proteinSide 2.. In terms of biological role, part of the Sec protein translocase complex. Interacts with the SecYEG preprotein conducting channel. Has a central role in coupling the hydrolysis of ATP to the transfer of proteins into and across the cell membrane, serving as an ATP-driven molecular motor driving the stepwise translocation of polypeptide chains across the membrane. This chain is Protein translocase subunit SecA, found in Mycoplasma genitalium (strain ATCC 33530 / DSM 19775 / NCTC 10195 / G37) (Mycoplasmoides genitalium).